We begin with the raw amino-acid sequence, 90 residues long: Progonadoliberin-3 (90 aa).

A signal peptide spans 1-23 (MEASSRVTVQVLLLALVVQVTLS). Glutamine 24 bears the Pyrrolidone carboxylic acid mark. At glycine 33 the chain carries Glycine amide.

Belongs to the GnRH family.

The protein resides in the secreted. Its function is as follows. Stimulates the secretion of gonadotropins. This Pagrus major (Red sea bream) protein is Progonadoliberin-3 (gnrh3).